The primary structure comprises 150 residues: CCAAT/enhancer-binding protein gamma (150 aa).

K3 participates in a covalent cross-link: Glycyl lysine isopeptide (Lys-Gly) (interchain with G-Cter in SUMO2). Positions 27–94 (GLQQVPQLVP…QKAQDTLQRV (68 aa)) are disordered. The span at 28–37 (LQQVPQLVPA) shows a compositional bias: low complexity. The span at 56 to 72 (SPMDRNSDEYRQRRERN) shows a compositional bias: basic and acidic residues. Positions 62–125 (SDEYRQRRER…SVLKDLFLEH (64 aa)) constitute a bZIP domain. Residues 66-93 (RQRRERNNMAVKKSRLKSKQKAQDTLQR) form a basic motif region. The leucine-zipper stretch occupies residues 97–118 (LKEENERLEAKIKLLTKELSVL). The interval 129 to 150 (LADNVQPISTETTATNSDNPGQ) is disordered. The segment covering 134–150 (QPISTETTATNSDNPGQ) has biased composition (polar residues).

The protein belongs to the bZIP family. C/EBP subfamily. Binds DNA as a dimer and can form stable heterodimers with CEBPA. Can form stable heterodimers with CEBPB. Interacts with ZNF638; this interaction increases transcriptional activation. In terms of tissue distribution, ubiquitous.

Its subcellular location is the nucleus. In terms of biological role, transcription factor that binds to the promoter and the enhancer regions of target genes. Binds to the promoter and the enhancer of the immunoglobulin heavy chain. Binds to GPE1, a cis-acting element in the G-CSF gene promoter. Binds to the enhancer element PRE-I (positive regulatory element-I) of the IL-4 gene. Binds to the promoter and the enhancer of the alpha-1-fetoprotein gene. The protein is CCAAT/enhancer-binding protein gamma (Cebpg) of Mus musculus (Mouse).